Reading from the N-terminus, the 468-residue chain is Dimethylamine methyltransferase MtbB1 (468 aa).

Residue Pyl356 is a non-standard amino acid, pyrrolysine.

This sequence belongs to the dimethylamine methyltransferase family.

The enzyme catalyses Co(I)-[dimethylamine-specific corrinoid protein] + dimethylamine + H(+) = methyl-Co(III)-[dimethylamine-specific corrinoid protein] + methylamine. Its pathway is one-carbon metabolism; methanogenesis from dimethylamine. Functionally, catalyzes the transfer of a methyl group from dimethylamine to the corrinoid cofactor of MtbC. The chain is Dimethylamine methyltransferase MtbB1 (mtbB1) from Methanosarcina mazei (strain ATCC BAA-159 / DSM 3647 / Goe1 / Go1 / JCM 11833 / OCM 88) (Methanosarcina frisia).